We begin with the raw amino-acid sequence, 479 residues long: ATP synthase subunit beta (479 aa).

153–160 (GGAGVGKT) provides a ligand contact to ATP.

The protein belongs to the ATPase alpha/beta chains family. In terms of assembly, F-type ATPases have 2 components, CF(1) - the catalytic core - and CF(0) - the membrane proton channel. CF(1) has five subunits: alpha(3), beta(3), gamma(1), delta(1), epsilon(1). CF(0) has three main subunits: a(1), b(2) and c(9-12). The alpha and beta chains form an alternating ring which encloses part of the gamma chain. CF(1) is attached to CF(0) by a central stalk formed by the gamma and epsilon chains, while a peripheral stalk is formed by the delta and b chains.

The protein localises to the cell membrane. The catalysed reaction is ATP + H2O + 4 H(+)(in) = ADP + phosphate + 5 H(+)(out). Produces ATP from ADP in the presence of a proton gradient across the membrane. The catalytic sites are hosted primarily by the beta subunits. The polypeptide is ATP synthase subunit beta (Lactobacillus delbrueckii subsp. bulgaricus (strain ATCC 11842 / DSM 20081 / BCRC 10696 / JCM 1002 / NBRC 13953 / NCIMB 11778 / NCTC 12712 / WDCM 00102 / Lb 14)).